The primary structure comprises 700 residues: MAVKMRIGRRRAIQQGIAEGGFEWRRVWGCREADSRGALWELVWGERSVRERNAAGAAEEVIALFIMDEMCDPASNLEYVVEKAKCDVHRTSSAEEFFTEYGDANRYRIQEVIGKGSYGVVCSAIDLHTRQKVAIKKVHNIFEHVSDAARILREIKLLRLLRHPDIVEIKHIMLPPSRRDFKDIYVVFELMESDLHQVIKANDDLTKEHYQFFLYQLLRALKYIHTASVYHRDLKPKNILANSNCKLKICDFGLARVAFNDTPTTVFWTDYVATRWYRAPELCGSFFSKYTPAIDIWSIGCIFAEVLTGKPLFPGKNVVHQLDLMTDLLGTPSMDTISRVRNEKARRYLSSMRKKDPVPFSQKFPNADPLALKLLQRLLAFDPKDRPTAEEALTDPYFKGLSKIDREPSCQPIRKLEFEFEQKKLSKEDIRELIFQEILEYHPQLQKNYRNGRERATFLYPSAVDQFKKQFSNLEESNGSGSAIPMERKHASLPRSTTVHSTPIPPKEQPLAASLKSSRPVSDEPCKNPWVMGGFSGNIPTSSQVSQVAKPVAPGRPVGSVFPYETGSTNDPYGPRGPVMSSGYPPQQQISQAYGYHQVPARMNCVEQSQAMDAYKMHSQSQTQAYAYPNSKVTADVALDMRGSTFHHSAGSKNGSLDRMVTQTDIYTRSLNGIVAAATSAGVGTNRKVGAVPISTSRMY.

The Protein kinase domain occupies 107–398 (YRIQEVIGKG…AEEALTDPYF (292 aa)). Residues 113-121 (IGKGSYGVV) and lysine 136 contribute to the ATP site. Aspartate 233 acts as the Proton acceptor in catalysis. A Phosphothreonine modification is found at threonine 269. Positions 269–271 (TDY) match the TXY motif. Position 271 is a phosphotyrosine (tyrosine 271). A disordered region spans residues 475–523 (EESNGSGSAIPMERKHASLPRSTTVHSTPIPPKEQPLAASLKSSRPVSD).

The protein belongs to the protein kinase superfamily. CMGC Ser/Thr protein kinase family. MAP kinase subfamily. Post-translationally, dually phosphorylated on Thr-269 and Tyr-271, which activates the enzyme.

The enzyme catalyses L-seryl-[protein] + ATP = O-phospho-L-seryl-[protein] + ADP + H(+). The catalysed reaction is L-threonyl-[protein] + ATP = O-phospho-L-threonyl-[protein] + ADP + H(+). Activated by threonine and tyrosine phosphorylation. The protein is Mitogen-activated protein kinase 9 (MPK9) of Oryza sativa subsp. japonica (Rice).